The following is a 136-amino-acid chain: Large ribosomal subunit protein uL16 (136 aa).

The protein belongs to the universal ribosomal protein uL16 family. As to quaternary structure, part of the 50S ribosomal subunit.

In terms of biological role, binds 23S rRNA and is also seen to make contacts with the A and possibly P site tRNAs. The protein is Large ribosomal subunit protein uL16 of Haemophilus influenzae (strain 86-028NP).